Reading from the N-terminus, the 201-residue chain is Peptide deformylase (201 aa).

The Fe cation site is built by Cys-114 and His-156. Glu-157 is a catalytic residue. His-160 provides a ligand contact to Fe cation.

Belongs to the polypeptide deformylase family. Fe(2+) is required as a cofactor.

The enzyme catalyses N-terminal N-formyl-L-methionyl-[peptide] + H2O = N-terminal L-methionyl-[peptide] + formate. Removes the formyl group from the N-terminal Met of newly synthesized proteins. Requires at least a dipeptide for an efficient rate of reaction. N-terminal L-methionine is a prerequisite for activity but the enzyme has broad specificity at other positions. This chain is Peptide deformylase, found in Tropheryma whipplei (strain TW08/27) (Whipple's bacillus).